A 151-amino-acid polypeptide reads, in one-letter code: Ribosome maturation factor RimP (151 aa).

The protein belongs to the RimP family.

Its subcellular location is the cytoplasm. Its function is as follows. Required for maturation of 30S ribosomal subunits. This Haemophilus influenzae (strain PittGG) protein is Ribosome maturation factor RimP.